The sequence spans 336 residues: Deoxyhypusine hydroxylase (336 aa).

2 HEAT-like PBS-type repeats span residues 68–94 (LKHELAYCLGQTRNTDALPFLLDVVQD) and 101–127 (CRHEAAEALGALGYESSLEVLKALRDN). Histidine 70, glutamate 71, histidine 103, and glutamate 104 together coordinate Fe cation. The tract at residues 158–179 (LKPSDFTSIDPAPPMPLTAKEP) is disordered. 2 HEAT-like PBS-type repeats span residues 235–261 (FRHEIAFVFGQLCHPASVPSLTETLSD) and 268–295 (VRHEAAEALGSLGDVEGVEDTLKKFLND). 4 residues coordinate Fe cation: histidine 237, glutamate 238, histidine 270, and glutamate 271.

Belongs to the deoxyhypusine hydroxylase family. Fe(2+) serves as cofactor.

It localises to the cytoplasm. Its subcellular location is the nucleus. It catalyses the reaction [eIF5A protein]-deoxyhypusine + AH2 + O2 = [eIF5A protein]-hypusine + A + H2O. It participates in protein modification; eIF5A hypusination. Functionally, catalyzes the hydroxylation of the N(6)-(4-aminobutyl)-L-lysine intermediate to form hypusine, an essential post-translational modification only found in mature eIF-5A factor. This is Deoxyhypusine hydroxylase (lia1) from Emericella nidulans (strain FGSC A4 / ATCC 38163 / CBS 112.46 / NRRL 194 / M139) (Aspergillus nidulans).